Reading from the N-terminus, the 212-residue chain is Thymidylate kinase (212 aa).

Residue Gly9–Thr16 coordinates ATP.

It belongs to the thymidylate kinase family.

It carries out the reaction dTMP + ATP = dTDP + ADP. Its function is as follows. Phosphorylation of dTMP to form dTDP in both de novo and salvage pathways of dTTP synthesis. The sequence is that of Thymidylate kinase from Synechococcus sp. (strain CC9311).